We begin with the raw amino-acid sequence, 335 residues long: tRNA N6-adenosine threonylcarbamoyltransferase (335 aa).

The Fe cation site is built by H112 and H116. Substrate contacts are provided by residues 134–138, D167, G180, and N273; that span reads VVSGG. A Fe cation-binding site is contributed by D301.

It belongs to the KAE1 / TsaD family. Fe(2+) is required as a cofactor.

It localises to the cytoplasm. It carries out the reaction L-threonylcarbamoyladenylate + adenosine(37) in tRNA = N(6)-L-threonylcarbamoyladenosine(37) in tRNA + AMP + H(+). Its function is as follows. Required for the formation of a threonylcarbamoyl group on adenosine at position 37 (t(6)A37) in tRNAs that read codons beginning with adenine. Is involved in the transfer of the threonylcarbamoyl moiety of threonylcarbamoyl-AMP (TC-AMP) to the N6 group of A37, together with TsaE and TsaB. TsaD likely plays a direct catalytic role in this reaction. The protein is tRNA N6-adenosine threonylcarbamoyltransferase of Shouchella clausii (strain KSM-K16) (Alkalihalobacillus clausii).